We begin with the raw amino-acid sequence, 196 residues long: Probable cobalt-precorrin-6B C(15)-methyltransferase (decarboxylating) (196 aa).

S-adenosyl-L-methionine contacts are provided by residues T24, 48–52 (GCGTG), D72, and A101.

This sequence belongs to the methyltransferase superfamily. Archaeal-type CbiT family.

It carries out the reaction Co-precorrin-6B + S-adenosyl-L-methionine = Co-precorrin-7 + S-adenosyl-L-homocysteine + CO2. It functions in the pathway cofactor biosynthesis; adenosylcobalamin biosynthesis; cob(II)yrinate a,c-diamide from sirohydrochlorin (anaerobic route): step 8/10. Catalyzes the methylation of C-15 in cobalt-precorrin-6B followed by the decarboxylation of C-12 to form cobalt-precorrin-7. In Pyrobaculum aerophilum (strain ATCC 51768 / DSM 7523 / JCM 9630 / CIP 104966 / NBRC 100827 / IM2), this protein is Probable cobalt-precorrin-6B C(15)-methyltransferase (decarboxylating).